Consider the following 333-residue polypeptide: SPbeta prophage-derived recombinase-like protein YomM (333 aa).

A Core-binding (CB) domain is found at 30–113 (EEHRNLVQEF…GVSSLNNYIE (84 aa)). Residues 142-332 (YEKVKVTYDD…DFEEEKNQIF (191 aa)) enclose the Tyr recombinase domain. Residues R180, K211, H281, and H308 contribute to the active site. The active-site O-(3'-phospho-DNA)-tyrosine intermediate is Y319.

Belongs to the 'phage' integrase family.

The polypeptide is SPbeta prophage-derived recombinase-like protein YomM (yomM) (Bacillus subtilis (strain 168)).